We begin with the raw amino-acid sequence, 180 residues long: Type-1 fimbrial protein, C chain (180 aa).

The first 23 residues, 1–23 (MKLKFISMAVFSALTLGVATNAS), serve as a signal peptide directing secretion. Cysteines 44 and 84 form a disulfide.

The protein belongs to the fimbrial protein family.

It is found in the fimbrium. Functionally, fimbriae (also called pili), polar filaments radiating from the surface of the bacterium to a length of 0.5-1.5 micrometers and numbering 100-300 per cell, enable bacteria to colonize the epithelium of specific host organs. In Escherichia coli O6:H1 (strain CFT073 / ATCC 700928 / UPEC), this protein is Type-1 fimbrial protein, C chain (pilC).